Reading from the N-terminus, the 285-residue chain is MKLIAIDLDGTLLNSKHQVSLENENALRQAQRDGIEVVVSTGRAHFDVMSIFEPLGIKTWVISANGAVIHDPEGRLYHHETIDKKRAYDILSWLESENYYYEVFTGSAIYTPQNGRELLDVELDRFRSANPEADLSVLKQAAEVQYSQSGFAYINSFQELFEADEPIDFYNILGFSFFKEKLEAGWKRYEHAEDLTLVSSAEHNFELSSRKASKGQALKRLAKQLNIPLEETAAVGDSLNDKSMLEAAGKGVAMGNAREDIKSIADAVTLTNDEHGVAHMMKHLL.

Catalysis depends on aspartate 7, which acts as the Nucleophile. Aspartate 7 is a binding site for Mg(2+). Leucine 8 contacts phosphate. Aspartate 9 is a binding site for Mg(2+). Phosphate is bound by residues 41 to 42 and lysine 214; that span reads TG. Mg(2+) is bound by residues aspartate 237 and serine 238. Phosphate-binding positions include asparagine 240 and 282–283; that span reads KH.

This sequence belongs to the HAD-like hydrolase superfamily. Cof family. Mg(2+) serves as cofactor.

In terms of biological role, catalyzes the dephosphorylation of phosphorylated 5-6 carbon sugars and monophosphate nucleotides (NMP) in vitro. To a lesser extent, dephosphorylates flavin mononucleotide (FMN) in vitro. This chain is Phosphatase YwpJ (ywpJ), found in Bacillus subtilis (strain 168).